A 170-amino-acid chain; its full sequence is Histone H1.9 (170 aa).

In terms of domain architecture, H15 spans R34 to K108. S56 bears the Phosphoserine mark. Positions A118 to P140 are disordered.

Belongs to the histone H1/H5 family. As to expression, expressed exclusively in the testis by haploid germ cells (at protein level).

Its subcellular location is the nucleus. It localises to the chromosome. Functionally, DNA-binding protein that may be implicated in chromatin remodeling and/or transcriptional regulation during spermiogenesis, the process of spermatid maturation into spermatozoa. This is Histone H1.9 from Mus musculus (Mouse).